Here is a 503-residue protein sequence, read N- to C-terminus: Probable cytosol aminopeptidase (503 aa).

Residues Lys274 and Asp279 each contribute to the Mn(2+) site. Residue Lys286 is part of the active site. Asp297, Asp356, and Glu358 together coordinate Mn(2+). Residue Arg360 is part of the active site.

Belongs to the peptidase M17 family. Mn(2+) serves as cofactor.

The protein resides in the cytoplasm. It catalyses the reaction Release of an N-terminal amino acid, Xaa-|-Yaa-, in which Xaa is preferably Leu, but may be other amino acids including Pro although not Arg or Lys, and Yaa may be Pro. Amino acid amides and methyl esters are also readily hydrolyzed, but rates on arylamides are exceedingly low.. It carries out the reaction Release of an N-terminal amino acid, preferentially leucine, but not glutamic or aspartic acids.. Functionally, presumably involved in the processing and regular turnover of intracellular proteins. Catalyzes the removal of unsubstituted N-terminal amino acids from various peptides. This chain is Probable cytosol aminopeptidase, found in Burkholderia mallei (strain SAVP1).